Reading from the N-terminus, the 91-residue chain is Small ribosomal subunit protein uS19 (91 aa).

This sequence belongs to the universal ribosomal protein uS19 family.

Protein S19 forms a complex with S13 that binds strongly to the 16S ribosomal RNA. This chain is Small ribosomal subunit protein uS19 (rpsS), found in Mycoplasmopsis pulmonis (strain UAB CTIP) (Mycoplasma pulmonis).